Consider the following 452-residue polypeptide: Probable multidrug resistance protein NorM (452 aa).

12 consecutive transmembrane segments (helical) span residues 12–34, 49–71, 91–113, 128–150, 162–184, 194–216, 245–267, 282–304, 317–339, 359–381, 388–410, and 415–437; these read RQFLTILIPILITQAGLSLITVL, GVAIGSSLWTPVYTGLAGILTAV, VIQSIYVAGIISLAVIVSGYFLI, VIAKQYLICIGLGILPLFVYNVM, VTMLITLCSLPINFVLNYLFIFG, AGAGLASAITYWCICLISLYIVH, GIPIGFAIFFETSIFAAVTLLMS, NFASLLYMLPLSVSMTLTIVVGF, YSYLGISIAVGFSLFTALIILLF, DFLLYALFFQLSDAIAAPIQGAL, NYTLVTALVSYWIIGLPVGFVIG, and FGAFGYWIGLITGLAAGAVGLFF.

Belongs to the multi antimicrobial extrusion (MATE) (TC 2.A.66.1) family.

The protein localises to the cell membrane. In terms of biological role, multidrug efflux pump. This Bacillus licheniformis (strain ATCC 14580 / DSM 13 / JCM 2505 / CCUG 7422 / NBRC 12200 / NCIMB 9375 / NCTC 10341 / NRRL NRS-1264 / Gibson 46) protein is Probable multidrug resistance protein NorM (norM).